A 759-amino-acid chain; its full sequence is Cullin-4A (759 aa).

The interval 1–40 (MADEGPRKGSVSALMGRTNGLTKPAALAGGPAKPGGTGGS) is disordered. A Glycyl lysine isopeptide (Lys-Gly) (interchain with G-Cter in SUMO2) cross-link involves residue Lys8. Phosphoserine is present on Ser10. The span at 20-31 (GLTKPAALAGGP) shows a compositional bias: low complexity. Lys33 participates in a covalent cross-link: Glycyl lysine isopeptide (Lys-Gly) (interchain with G-Cter in ubiquitin). Positions 691–750 (DRQYQIDAAIVRIMKMRKTLGHNLLVSELYNQLKFPVKPGDLKKRIESLIDRDYMERDKD) constitute a Cullin neddylation domain. A Glycyl lysine isopeptide (Lys-Gly) (interchain with G-Cter in NEDD8) cross-link involves residue Lys705.

The protein belongs to the cullin family. In terms of assembly, can self-associate. Component of multiple DCX (DDB1-CUL4-X-box) E3 ubiquitin-protein ligase complexes that seem to consist of DDB1, CUL4A or CUL4B, RBX1 and a variable substrate recognition component which seems to belong to a protein family described as DCAF (Ddb1- and Cul4-associated factor) or CDW (CUL4-DDB1-associated WD40-repeat) proteins. Component of the CSA complex (DCX(ERCC8) complex) containing ERCC8, RBX1, DDB1 and CUL4A; the CSA complex interacts with RNA polymerase II; upon UV irradiation it interacts with the COP9 signalosome and preferentially with the hyperphosphorylated form of RNA polymerase II. Component of the DCX(DET1-COP1) complex with the substrate recognition component DET1 and COP1. Component of the DCX(DDB2) complex with the substrate recognition component DDB2. Component of the DCX(DTL) complex with the putative substrate recognition component DTL. Component of DCX complexes part of the DesCEND (destruction via C-end degrons) pathway, which contain either TRPC4AP or DCAF12 as substrate-recognition component. Component of the DCX(AMBRA1) complex with the substrate recognition component AMBRA1. Interacts with DDB1, RBX1, RNF7, CDT1, TIP120A/CAND1, SKP2, CDKN1B, MDM2, TP53 and HOXA9. Interacts with DDB2; the interactions with DDB2 and CAND1 are mutually exclusive. Interacts with DCAF1, DTL, DDA1, DCAF6, DCAF4, DCAF16, DCAF17, DET1, WDTC1, DCAF5, DCAF11, WDR24A, COP1, PAFAH1B1, ERCC8, GRWD1, FBXW5, RBBP7, GNB2, WSB1, WSB2, NUP43, PWP1, FBXW8, ATG16L1, KATNB1, RBBP4, RBBP5, LRWD1 and DCAF8. May interact with WDR26, WDR51B, SNRNP40, WDR61, WDR76, WDR5. Interacts (when neddylated) with ARIH1; leading to activate the E3 ligase activity of ARIH1. The DDB1-CUL4A complex interacts with CRY1. Interacts (unneddylated form) with DCUN1D1, DCUN1D2, DCUN1D3, DCUN1D4 and DCUN1D5; these interactions promote the cullin neddylation. (Microbial infection) Interacts with murine cytomegalovirus M48. Neddylated; required for activity of cullin-RING-based E3 ubiquitin-protein ligase complexes. Deneddylated via its interaction with the COP9 signalosome (CSN) complex. Post-translationally, (Microbial infection) Deneddylated by murine cytomegalovirus M48 leading to a S-phase-like environment that is required for efficient replication of the viral genome. Expressed in oocytes (at protein level). In the ovary, also expressed in cumulus cells. Expressed in testis, spleen and kidney.

Its pathway is protein modification; protein ubiquitination. Functionally, core component of multiple cullin-RING-based E3 ubiquitin-protein ligase complexes which mediate the ubiquitination of target proteins. As a scaffold protein may contribute to catalysis through positioning of the substrate and the ubiquitin-conjugating enzyme. The E3 ubiquitin-protein ligase activity of the complex is dependent on the neddylation of the cullin subunit and is inhibited by the association of the deneddylated cullin subunit with TIP120A/CAND1. The functional specificity of the E3 ubiquitin-protein ligase complex depends on the variable substrate recognition component. DCX(DET1-COP1) directs ubiquitination of JUN. DCX(DDB2) directs ubiquitination of XPC. DCX(DDB2) ubiquitinates histones H3-H4 and is required for efficient histone deposition during replication-coupled (H3.1) and replication-independent (H3.3) nucleosome assembly, probably by facilitating the transfer of H3 from ASF1A/ASF1B to other chaperones involved in histone deposition. DCX(DTL) plays a role in PCNA-dependent polyubiquitination of CDT1 and MDM2-dependent ubiquitination of p53/TP53 in response to radiation-induced DNA damage and during DNA replication. DCX(DTL) directs autoubiquitination of DTL. In association with DDB1 and SKP2 probably is involved in ubiquitination of CDKN1B/p27kip. Is involved in ubiquitination of HOXA9. The DDB1-CUL4A-DTL E3 ligase complex regulates the circadian clock function by mediating the ubiquitination and degradation of CRY1. The DCX(ERCC8) complex (also named CSA complex) plays a role in transcription-coupled repair (TCR). A number of DCX complexes (containing either TRPC4AP or DCAF12 as substrate-recognition component) are part of the DesCEND (destruction via C-end degrons) pathway, which recognizes a C-degron located at the extreme C terminus of target proteins, leading to their ubiquitination and degradation. With CUL4B, contributes to ribosome biogenesis. The DCX(AMBRA1) complex is a master regulator of the transition from G1 to S cell phase by mediating ubiquitination of phosphorylated cyclin-D (CCND1, CCND2 and CCND3). The DCX(AMBRA1) complex also acts as a regulator of Cul5-RING (CRL5) E3 ubiquitin-protein ligase complexes by mediating ubiquitination and degradation of Elongin-C (ELOC) component of CRL5 complexes. In Mus musculus (Mouse), this protein is Cullin-4A.